The sequence spans 2135 residues: Plexin-B1 (2135 aa).

An N-terminal signal peptide occupies residues 1–19; sequence MPALGPALLQALWAGWVLT. One can recognise a Sema domain in the interval 20–479; sequence LQPLPPTAFT…TQSTLLKVPV (460 aa). The Extracellular segment spans residues 20–1490; that stretch reads LQPLPPTAFT…SPGAFPVAAQ (1471 aa). An N-linked (GlcNAc...) asparagine glycan is attached at Asn-31. 9 disulfide bridges follow: Cys-79–Cys-88, Cys-111–Cys-119, Cys-252–Cys-377, Cys-268–Cys-322, Cys-340–Cys-364, Cys-482–Cys-499, Cys-488–Cys-533, Cys-491–Cys-508, and Cys-502–Cys-514. N-linked (GlcNAc...) asparagine glycosylation occurs at Asn-334. Residue Asn-543 is glycosylated (N-linked (GlcNAc...) asparagine). The cysteines at positions 570 and 588 are disulfide-linked. Disordered stretches follow at residues 671-829 and 849-884; these read MVAS…TTFP and LPEA…PPAP. The span at 681-697 shows a compositional bias: pro residues; it reads SPDPPARGGPSPSPPTA. Composition is skewed to low complexity over residues 698–710 and 734–754; these read PKAL…DTLP and SPWG…TGSP. 3 consecutive IPT/TIG domains span residues 1070–1160, 1162–1249, and 1252–1375; these read PLIH…FAYQ, PKVH…FKYT, and PNIT…FSYE. Residues Asn-1183, Asn-1253, and Asn-1330 are each glycosylated (N-linked (GlcNAc...) asparagine). Residues 1491–1511 form a helical membrane-spanning segment; that stretch reads VGLGVGTSLLALGVIIIVLMY. A coiled-coil region spans residues 1507–1539; sequence IVLMYRRKSKQALRDYKKVQIQLENLESSVRDR. Over 1512–2135 the chain is Cytoplasmic; sequence RRKSKQALRD…AAVENKVTDL (624 aa). Residues 1883–1908 form a disordered region; it reads PWHLVKPSDEPEPPRPRRGSLRGGER. Residues 1888-1897 are compositionally biased toward basic and acidic residues; the sequence is KPSDEPEPPR.

This sequence belongs to the plexin family. Monomer, and heterodimer with PLXNB2 after proteolytic processing. Binds RAC1 that has been activated by GTP binding. Interaction with SEMA4D promotes binding of cytoplasmic ligands. Interacts with PLXNA1. Interacts with ARHGEF11 and ARHGEF12. Interacts with ERBB2. Interacts with MET. Interacts with MST1R. Interacts with RRAS. Interacts with RHOD. Interacts with RND1. Interacts with NRP1 and NRP2. In terms of processing, phosphorylated on tyrosine residues by ERBB2 and MET upon SEMA4D binding. Post-translationally, proteolytic processing favors heterodimerization with PLXNB2 and SEMA4D binding. Highly expressed in fetal kidney, and at slightly lower levels in fetal brain, lung and liver.

It localises to the cell membrane. Its subcellular location is the secreted. Its function is as follows. Receptor for SEMA4D. Plays a role in GABAergic synapse development. Mediates SEMA4A- and SEMA4D-dependent inhibitory synapse development. Plays a role in RHOA activation and subsequent changes of the actin cytoskeleton. Plays a role in axon guidance, invasive growth and cell migration. This Homo sapiens (Human) protein is Plexin-B1 (PLXNB1).